Here is a 539-residue protein sequence, read N- to C-terminus: O-phosphoserine--tRNA(Cys) ligase (539 aa).

Substrate-binding positions include H188–T190, S233–S235, Y275–Y276, and N319.

It belongs to the class-II aminoacyl-tRNA synthetase family. O-phosphoseryl-tRNA(Cys) synthetase subfamily. In terms of assembly, homotetramer. Interacts with SepCysS.

It catalyses the reaction tRNA(Cys) + O-phospho-L-serine + ATP = O-phospho-L-seryl-tRNA(Cys) + AMP + diphosphate. Functionally, catalyzes the attachment of O-phosphoserine (Sep) to tRNA(Cys). The chain is O-phosphoserine--tRNA(Cys) ligase (sepS) from Methanocaldococcus jannaschii (strain ATCC 43067 / DSM 2661 / JAL-1 / JCM 10045 / NBRC 100440) (Methanococcus jannaschii).